The chain runs to 200 residues: Holliday junction branch migration complex subunit RuvA (200 aa).

Positions 1–64 (MIAHLTGLVG…EDAFLLYGFA (64 aa)) are domain I. Residues 65 to 143 (EAAERDWFRL…RMPAGPGVTI (79 aa)) are domain II. The segment at 144-147 (AAPP) is flexible linker. Positions 148 to 200 (ASGGVEADALLALAGLGFRRAEAQPVVGRILARLDGKADLDVVIRESLRELAR) are domain III.

The protein belongs to the RuvA family. Homotetramer. Forms an RuvA(8)-RuvB(12)-Holliday junction (HJ) complex. HJ DNA is sandwiched between 2 RuvA tetramers; dsDNA enters through RuvA and exits via RuvB. An RuvB hexamer assembles on each DNA strand where it exits the tetramer. Each RuvB hexamer is contacted by two RuvA subunits (via domain III) on 2 adjacent RuvB subunits; this complex drives branch migration. In the full resolvosome a probable DNA-RuvA(4)-RuvB(12)-RuvC(2) complex forms which resolves the HJ.

The protein resides in the cytoplasm. In terms of biological role, the RuvA-RuvB-RuvC complex processes Holliday junction (HJ) DNA during genetic recombination and DNA repair, while the RuvA-RuvB complex plays an important role in the rescue of blocked DNA replication forks via replication fork reversal (RFR). RuvA specifically binds to HJ cruciform DNA, conferring on it an open structure. The RuvB hexamer acts as an ATP-dependent pump, pulling dsDNA into and through the RuvAB complex. HJ branch migration allows RuvC to scan DNA until it finds its consensus sequence, where it cleaves and resolves the cruciform DNA. The protein is Holliday junction branch migration complex subunit RuvA of Gluconacetobacter diazotrophicus (strain ATCC 49037 / DSM 5601 / CCUG 37298 / CIP 103539 / LMG 7603 / PAl5).